A 97-amino-acid polypeptide reads, in one-letter code: MTDLRHYDVIVSPSITEKSTLVSEQNQVVFNVAKGASKPEIKAAVEALFGVKVTAVNTLVRKGKLKRFRGFAGKQKDVKKAIVTLADGQSIDVSTGL.

This sequence belongs to the universal ribosomal protein uL23 family. Part of the 50S ribosomal subunit. Contacts protein L29, and trigger factor when it is bound to the ribosome.

In terms of biological role, one of the early assembly proteins it binds 23S rRNA. One of the proteins that surrounds the polypeptide exit tunnel on the outside of the ribosome. Forms the main docking site for trigger factor binding to the ribosome. The chain is Large ribosomal subunit protein uL23 from Sinorhizobium medicae (strain WSM419) (Ensifer medicae).